The sequence spans 542 residues: Nuclear speckle splicing regulatory protein 1 (542 aa).

The disordered stretch occupies residues 21 to 53; that stretch reads RVLQKPSVFGSDSDDDETSVSESLQREAAKKQA. 3 positions are modified to phosphoserine: Ser27, Ser31, and Ser33. Residues 103 to 172 are a coiled coil; sequence IHNLLKAVEI…RAAALEAHLD (70 aa). Residues 105-169 are necessary for alternative splicing activity; sequence NLLKAVEIRK…REKRAAALEA (65 aa). The segment at 190-516 is disordered; it reads AVGEEAAPKS…FAKRSNEETV (327 aa). Glycyl lysine isopeptide (Lys-Gly) (interchain with G-Cter in SUMO2) cross-links involve residues Lys198 and Lys209. The segment covering 200–217 has biased composition (basic and acidic residues); that stretch reads SFREARTVIKEEKLRGYP. Positions 223 to 232 are enriched in polar residues; the sequence is ESRPPQQSCV. Acidic residues predominate over residues 239 to 256; it reads EAEENPDADREFDDESSE. Phosphoserine is present on residues Ser254 and Ser255. Positions 257–271 are enriched in basic and acidic residues; the sequence is DGEKRDHKVKSRGED. N6-acetyllysine is present on Lys277. Over residues 277-288 the composition is skewed to basic residues; the sequence is KHPKHHKNRAHS. Lys280 is covalently cross-linked (Glycyl lysine isopeptide (Lys-Gly) (interchain with G-Cter in SUMO2)). Basic and acidic residues-rich tracts occupy residues 309 to 335, 343 to 475, and 485 to 501; these read RGHEHQDRQSRDQESCHKDRSHREEKS, SHKD…KPSH, and RLAEERPEKGSEQERPP. Residues 372–413 adopt a coiled-coil conformation; sequence KREKYSSREQERDRQRNDHDRYSEKEKKRKEKEEHTKARRER. At Ser443 the chain carries Phosphoserine.

This sequence belongs to the NSRP1 family. As to quaternary structure, interacts (via C-terminus) with SRSF1. Interacts (via C-terminus) with SRSF2.

It is found in the nucleus. The protein localises to the nucleus speckle. Functionally, RNA-binding protein that mediates pre-mRNA alternative splicing regulation. This Mus musculus (Mouse) protein is Nuclear speckle splicing regulatory protein 1 (Nsrp1).